Consider the following 56-residue polypeptide: Large ribosomal subunit protein bL32 (56 aa).

The tract at residues 1-39 is disordered; sequence MAVQQNKKSRSKRGMRRSHDSLSTAQLSVDATSGELHRR. Basic residues predominate over residues 7-16; it reads KKSRSKRGMR. The segment covering 21–31 has biased composition (polar residues); it reads SLSTAQLSVDA.

The protein belongs to the bacterial ribosomal protein bL32 family.

In Shewanella piezotolerans (strain WP3 / JCM 13877), this protein is Large ribosomal subunit protein bL32.